The chain runs to 150 residues: UPF0178 protein AZOSEA36080 (150 aa).

The protein belongs to the UPF0178 family.

The polypeptide is UPF0178 protein AZOSEA36080 (Aromatoleum aromaticum (strain DSM 19018 / LMG 30748 / EbN1) (Azoarcus sp. (strain EbN1))).